The sequence spans 143 residues: Hemoglobin subunit alpha-1 (143 aa).

S2 carries the post-translational modification N-acetylserine. Positions 2 to 143 (SLSTKDKETV…VSLALAEKYR (142 aa)) constitute a Globin domain. H60 contacts O2. H89 contributes to the heme b binding site.

The protein belongs to the globin family. In terms of assembly, hb1 is a heterotetramer of two alpha-1 chains and two beta-1 chains. As to expression, red blood cells.

Functionally, involved in oxygen transport from gills to the various peripheral tissues. This chain is Hemoglobin subunit alpha-1, found in Liparis tunicatus (Kelp snailfish).